The primary structure comprises 275 residues: 2,3,4,5-tetrahydropyridine-2,6-dicarboxylate N-succinyltransferase (275 aa).

Residues Arg-106 and Asp-143 each coordinate substrate.

Belongs to the transferase hexapeptide repeat family. In terms of assembly, homotrimer.

The protein localises to the cytoplasm. The enzyme catalyses (S)-2,3,4,5-tetrahydrodipicolinate + succinyl-CoA + H2O = (S)-2-succinylamino-6-oxoheptanedioate + CoA. It functions in the pathway amino-acid biosynthesis; L-lysine biosynthesis via DAP pathway; LL-2,6-diaminopimelate from (S)-tetrahydrodipicolinate (succinylase route): step 1/3. In Cupriavidus necator (strain ATCC 17699 / DSM 428 / KCTC 22496 / NCIMB 10442 / H16 / Stanier 337) (Ralstonia eutropha), this protein is 2,3,4,5-tetrahydropyridine-2,6-dicarboxylate N-succinyltransferase.